Here is a 232-residue protein sequence, read N- to C-terminus: Large ribosomal subunit protein uL1 (232 aa).

The protein belongs to the universal ribosomal protein uL1 family. Part of the 50S ribosomal subunit.

Its function is as follows. Binds directly to 23S rRNA. The L1 stalk is quite mobile in the ribosome, and is involved in E site tRNA release. In terms of biological role, protein L1 is also a translational repressor protein, it controls the translation of the L11 operon by binding to its mRNA. This is Large ribosomal subunit protein uL1 from Cereibacter sphaeroides (strain ATCC 17029 / ATH 2.4.9) (Rhodobacter sphaeroides).